A 156-amino-acid polypeptide reads, in one-letter code: ATP synthase subunit b (156 aa).

Residues 7–29 (LLGQAISFLLFVWFCMKFVWPPL) traverse the membrane as a helical segment.

Belongs to the ATPase B chain family. F-type ATPases have 2 components, F(1) - the catalytic core - and F(0) - the membrane proton channel. F(1) has five subunits: alpha(3), beta(3), gamma(1), delta(1), epsilon(1). F(0) has three main subunits: a(1), b(2) and c(10-14). The alpha and beta chains form an alternating ring which encloses part of the gamma chain. F(1) is attached to F(0) by a central stalk formed by the gamma and epsilon chains, while a peripheral stalk is formed by the delta and b chains.

Its subcellular location is the cell inner membrane. Its function is as follows. F(1)F(0) ATP synthase produces ATP from ADP in the presence of a proton or sodium gradient. F-type ATPases consist of two structural domains, F(1) containing the extramembraneous catalytic core and F(0) containing the membrane proton channel, linked together by a central stalk and a peripheral stalk. During catalysis, ATP synthesis in the catalytic domain of F(1) is coupled via a rotary mechanism of the central stalk subunits to proton translocation. Component of the F(0) channel, it forms part of the peripheral stalk, linking F(1) to F(0). This is ATP synthase subunit b from Shewanella halifaxensis (strain HAW-EB4).